The primary structure comprises 296 residues: Isoprenyl transferase (296 aa).

The segment covering 1–11 (MATERNRRRKG) has biased composition (basic residues). A disordered region spans residues 1 to 29 (MATERNRRRKGSYPQLPPAPDDYPTFPDK). Asp-76 is an active-site residue. Asp-76 is a Mg(2+) binding site. Residues 77 to 80 (GNGR), Trp-81, Arg-89, His-93, and 121 to 123 (STE) contribute to the substrate site. The Proton acceptor role is filled by Asn-124. Substrate is bound by residues Trp-125, Arg-127, Arg-244, and 250-252 (RAS). Glu-263 provides a ligand contact to Mg(2+).

It belongs to the UPP synthase family. As to quaternary structure, homodimer. It depends on Mg(2+) as a cofactor.

Its function is as follows. Catalyzes the condensation of isopentenyl diphosphate (IPP) with allylic pyrophosphates generating different type of terpenoids. This chain is Isoprenyl transferase, found in Mycolicibacterium parafortuitum (Mycobacterium parafortuitum).